The primary structure comprises 494 residues: UPF0371 protein spr0309 (494 aa).

It belongs to the UPF0371 family.

The sequence is that of UPF0371 protein spr0309 from Streptococcus pneumoniae (strain ATCC BAA-255 / R6).